Reading from the N-terminus, the 694-residue chain is MQTNPNMFLNRELSWLRFNSRVLDQCSRPLPLLERLKFVAIYCTNLDEFYMIRVAGLKQLFSAGVNISSSDEMSPLQQLKAIRKYLHKEKDLLEHYFNEIISDLEKENLFIKNYENLDNNLKQKVYEYFFSTIFPVIVPIAVDATHPFPHLNNLSFSLAVNICDNTHPELIKFGMIRIPRVLPRFYEVSANVYVPIESIVEKHTEEIFPGYKLLTSAAFRVTRNADMVIEEEEADDFMMILEQGLKLRRKGAFVRLQIQKGADEQIVEFLNTHMKIFHKDVYEYSILLNLPSLWQIAGNKTFTHLLSPLYTPKTLPPFDENLSIFDAIDKEDILIIQPFESFDPVYKFIKEASKDPEVISIRMTLYRVEKNSNIVQALIGAASAGIQVTVMVELKARFDEENNLHWAKALENAGAHVIYGITGFKVHAKVSQVIRKKGDKLKFYMHLSTGNYNASSAKIYTDVSYFTSKVEFARDTTSFFHILSGFSKNRRLQTLSMSPNQIKEKILEMIALEASKGSEGVIIAKMNSLVDSDIIKALYEASIKGTQIDLIVRGIFCLKPNEEFSKNILVRSIIGKYLEHARVFYFKHSEPNYFISSADWMPRNLERRLELMTPIYDERSKAKLAQFLRLQLSDNLLAYELQNDGEYAKVASNEKVIDSQQILEEYVSKIYKTLKKDTDQSRATHLASKLFKEN.

Asn45 contributes to the ATP binding site. Residues Arg367 and Arg397 each coordinate Mg(2+). The active-site Phosphohistidine intermediate is the His427. ATP-binding residues include Tyr460, Arg553, and His580.

The protein belongs to the polyphosphate kinase 1 (PPK1) family. Mg(2+) serves as cofactor. An intermediate of this reaction is the autophosphorylated ppk in which a phosphate is covalently linked to a histidine residue through a N-P bond.

It catalyses the reaction [phosphate](n) + ATP = [phosphate](n+1) + ADP. Catalyzes the reversible transfer of the terminal phosphate of ATP to form a long-chain polyphosphate (polyP). The sequence is that of Polyphosphate kinase from Campylobacter coli.